The sequence spans 113 residues: U11-theraphotoxin-Hhn1a (113 aa).

The N-terminal stretch at 1–21 (MNTVRVTFLLVFVLAVSLGQA) is a signal peptide. The propeptide occupies 22–74 (DKDENRMEMQEKTEQGESYLDFAENLLLQKLEELEAKLLEEDSEESRNSRQKR). Cystine bridges form between Cys75–Cys90, Cys82–Cys95, and Cys89–Cys110.

This sequence belongs to the neurotoxin 14 (magi-1) family. 01 (HNTX-16) subfamily. As to expression, expressed by the venom gland.

The protein localises to the secreted. Its function is as follows. Probable ion channel inhibitor. This is U11-theraphotoxin-Hhn1a from Cyriopagopus hainanus (Chinese bird spider).